The chain runs to 357 residues: N-acetyl-gamma-glutamyl-phosphate reductase (357 aa).

C160 is an active-site residue.

Belongs to the NAGSA dehydrogenase family. Type 1 subfamily.

It is found in the cytoplasm. It catalyses the reaction N-acetyl-L-glutamate 5-semialdehyde + phosphate + NADP(+) = N-acetyl-L-glutamyl 5-phosphate + NADPH + H(+). It functions in the pathway amino-acid biosynthesis; L-arginine biosynthesis; N(2)-acetyl-L-ornithine from L-glutamate: step 3/4. Catalyzes the NADPH-dependent reduction of N-acetyl-5-glutamyl phosphate to yield N-acetyl-L-glutamate 5-semialdehyde. The protein is N-acetyl-gamma-glutamyl-phosphate reductase of Synechococcus sp. (strain CC9605).